Reading from the N-terminus, the 58-residue chain is Small ribosomal subunit protein uS14 (58 aa).

A disordered region spans residues 1–21; it reads MSESETEQTGEHASHRTGQTH. A compositionally biased stretch (basic and acidic residues) spans 9-21; the sequence is TGEHASHRTGQTH. Zn(2+) is bound by residues C23, C26, C41, and C44.

This sequence belongs to the universal ribosomal protein uS14 family. Zinc-binding uS14 subfamily. In terms of assembly, part of the 30S ribosomal subunit. It depends on Zn(2+) as a cofactor.

In terms of biological role, binds 16S rRNA, required for the assembly of 30S particles. This Haloquadratum walsbyi (strain DSM 16790 / HBSQ001) protein is Small ribosomal subunit protein uS14.